Reading from the N-terminus, the 551-residue chain is Nose resistant to fluoxetine protein 5 (551 aa).

An N-terminal signal peptide occupies residues 1–20 (MSRNFHIFFLLVSIIQVGNS). Cys151 and Cys232 form a disulfide bridge. The disordered stretch occupies residues 241–265 (EDSEQEEGNVETTVAPTPDDDNSTL).

It belongs to the BPI/LBP/Plunc superfamily. BPI/LBP family. As to quaternary structure, interacts with ttr-52. In terms of tissue distribution, expressed in the body wall muscle cells and detected at the basal surface of pharyngeal cells and basal-lateral membranes of the intestine.

It localises to the secreted. In terms of biological role, plays a role in the uptake of a range of molecules including phosphatidylserine, lipids and xenobiotic compounds from the intestine to surrounding tissues. Possesses lipid transfer activity. Mediates transport of lipids from intestine to reproductive tract. Binds phosphatidylserine. Plays a role in efficient clearance of cell corpses by mediating phosphatidylserine appearance on phagocytic cells, thus promoting phagocytic engulfment of apoptotic cells. Vital for embryonic development. The sequence is that of Nose resistant to fluoxetine protein 5 from Caenorhabditis elegans.